A 675-amino-acid polypeptide reads, in one-letter code: Protein PALS1 (675 aa).

Residues 1-345 (MTTSYMNGHV…QQIKPPPAKE (345 aa)) are required for the correct localization of PALS1 and PATJ at cell-cell contacts and the normal formation of tight junctions and adherens junctions. Phosphoserine is present on residues serine 14 and serine 25. The segment at 21-140 (LDLASPEEYP…LKHIQHTLVD (120 aa)) is interaction with PARD6B. The tract at residues 51 to 79 (RRSAQLERIRQQQEDMRRRREEEGKKQEL) is disordered. Residues 54–79 (AQLERIRQQQEDMRRRREEEGKKQEL) are compositionally biased toward basic and acidic residues. 2 positions are modified to phosphoserine: serine 83 and serine 84. L27 domains are found at residues 120–177 (NILD…SKAS) and 179–235 (PFPL…MQLE). An interaction with LIN7C region spans residues 181–243 (PLIANVQDLV…LEPITDERVY (63 aa)). Positions 256–336 (IVRIEKARDI…TLTFVLIPSQ (81 aa)) constitute a PDZ domain. Residues 345-417 (ETVIHVKAHF…PGKSFQQQRE (73 aa)) enclose the SH3 domain. The region spanning 479 to 660 (KRPIILIGPQ…AYQELLRLIN (182 aa)) is the Guanylate kinase-like domain. 486–493 (GPQNCGQN) contacts ATP.

This sequence belongs to the MAGUK family. In terms of assembly, heterodimer with MPP1. Forms a heterotrimeric complex composed of PALS1, LIN7B and PATJ; the N-terminal L27 domain of PALS1 interacts with the L27 domain of PATJ and the C-terminal L27 domain of PALS1 interacts with the L27 domain of LIN7B. Component of a complex composed of PALS1, CRB1 and MPP4. Component of a complex whose core is composed of ARHGAP17, AMOT, PALS1, PATJ and PARD3/PAR3. Component of a complex composed of PALS1, CRB1 and EPB41L5. Within the complex, interacts (via HOOK domain) with EPB41L5 (via FERM domain), and interacts with CRB1 (via intracellular domain). Component of a complex composed of PALS1, MPP3 and CRB1; PALS1 acts as a bridging protein between MPP3 (via guanylate kinase-like domain) and CRB1. Component of a complex composed of CRB3, PALS1 and PATJ. As part of the Crumbs complex; interacts with WWP1, the interaction is enhanced by AMOTL2 and facilitates WWP1 localization to the plasma membrane. The Crumbs complex promotes monoubiquitination of AMOTL2 by WWP1, which activates the Hippo signaling pathway. Interacts (via PDZ domain) with PATJ (via N-terminus). Interacts with EZR. Interacts (via PDZ domain) with CRB1 (via C-terminal ERLI motif). While the PDZ domain is sufficient for interaction with CRB1, the adjacent SH3 and guanylate kinase-like domains are likely to contribute to a high affinity interaction. Interacts with WWTR1/TAZ (via WW domain). Interacts with MPP7. Interacts (via PDZ domain) with CRB3 (via C-terminus). Interacts with LIN7C. Interacts with MPDZ. Interacts with PARD6B. Interacts with SC6A1. Interacts with CDH5; the interaction promotes PALS1 localization to cell junctions and is required for CDH5-mediated vascular lumen formation and endothelial cell. Interacts with NPHP1 (via coiled coil and SH3 domains). Interacts with NPHP4. Interacts with CRB2. As to expression, expressed in the retinal pigment epithelium (at protein level). Expressed in the vascular plexus of the retina (at protein level). In the brain, expressed in the dentate gyrus of hippocampus, striatum and cerebellum (at protein level). Expressed in the sciatic nerve (at protein level). Expressed in the kidney nephron (at protein level). Expressed in the lung, and heart. Expressed in placenta, brain, skeletal muscles, pancreas and liver.

The protein localises to the golgi apparatus. Its subcellular location is the cell membrane. It is found in the endomembrane system. It localises to the cell junction. The protein resides in the tight junction. The protein localises to the adherens junction. Its subcellular location is the cell projection. It is found in the axon. It localises to the perikaryon. The protein resides in the apical cell membrane. Its function is as follows. Plays a role in tight junction biogenesis and in the establishment of cell polarity in epithelial cells. Also involved in adherens junction biogenesis by ensuring correct localization of the exocyst complex protein EXOC4/SEC8 which allows trafficking of adherens junction structural component CDH1 to the cell surface. Plays a role through its interaction with CDH5 in vascular lumen formation and endothelial membrane polarity. Required during embryonic and postnatal retinal development. Required for the maintenance of cerebellar progenitor cells in an undifferentiated proliferative state, preventing premature differentiation, and is required for cerebellar histogenesis, fissure formation, cerebellar layer organization and cortical development. Plays a role in neuronal progenitor cell survival, potentially via promotion of mTOR signaling. Plays a role in the radial and longitudinal extension of the myelin sheath in Schwann cells. May modulate SC6A1/GAT1-mediated GABA uptake by stabilizing the transporter. May play a role in the T-cell receptor-mediated activation of NF-kappa-B. Required for localization of EZR to the apical membrane of parietal cells and may play a role in the dynamic remodeling of the apical cytoskeleton. Required for the normal polarized localization of the vesicular marker STX4. Required for the correct trafficking of the myelin proteins PMP22 and MAG. Involved in promoting phosphorylation and cytoplasmic retention of transcriptional coactivators YAP1 and WWTR1/TAZ which leads to suppression of TGFB1-dependent transcription of target genes such as CCN2/CTGF, SERPINE1/PAI1, SNAI1/SNAIL1 and SMAD7. The polypeptide is Protein PALS1 (Mus musculus (Mouse)).